Reading from the N-terminus, the 600-residue chain is DNA repair and recombination protein mus-11 (600 aa).

Residues 148-152 mediate DNA binding; the sequence is KRALR. The span at 268–319 shows a compositional bias: polar residues; it reads LNPQAQQSRPLSRSGSTGSLNTRQQPQNSHQFTARAQSRPPQQQLNSNQSRP. Disordered regions lie at residues 268–357 and 387–600; these read LNPQ…AGAA and APKP…QRLA. Composition is skewed to low complexity over residues 325–343 and 458–470; these read NNSS…TTPQ and ARSA…RAGP. Residues 502–512 show a composition bias toward polar residues; that stretch reads GFSSSPSTNRG. 2 stretches are compositionally biased toward low complexity: residues 540–564 and 577–591; these read SATT…APSA and ANAS…ATSG.

Belongs to the RAD52 family. Part of a complex that includes mei-3/rad51 and mus-11/rad52.

It localises to the nucleus. Functionally, involved in DNA double-strand break (DSB) repair and recombination. Promotes the annealing of complementary single-stranded DNA and by stimulation of the mei-3/rad51 recombinase. This Neurospora crassa (strain ATCC 24698 / 74-OR23-1A / CBS 708.71 / DSM 1257 / FGSC 987) protein is DNA repair and recombination protein mus-11 (mus-11).